A 314-amino-acid polypeptide reads, in one-letter code: Malate dehydrogenase (314 aa).

9–15 (IGVGNVG) serves as a coordination point for NAD(+). 2 residues coordinate substrate: R84 and R90. NAD(+) is bound by residues N97 and 120–122 (ISN). N122 and R153 together coordinate substrate. Catalysis depends on H177, which acts as the Proton acceptor.

This sequence belongs to the LDH/MDH superfamily.

The enzyme catalyses (S)-malate + NAD(+) = oxaloacetate + NADH + H(+). In terms of biological role, catalyzes the reversible oxidation of malate to oxaloacetate. This Aliarcobacter butzleri (strain RM4018) (Arcobacter butzleri) protein is Malate dehydrogenase.